A 172-amino-acid chain; its full sequence is MSSLENNNSSWIDWFLGIKGNQFLCRVPTDYVQDTFNQMGLEYFSEILDVILKPVIDSSSGLLYGDEKKWYGMIHARYIRSERGLIAMHRKYLRGDFGSCPNISCYRQNTLPVGLSAVWGKSTVKIHCPRCKSNFHPKSDTQLDGAMFGPSFPDIFFSMLPNLTSPLDDPRT.

The protein belongs to the casein kinase 2 subunit beta family. As to quaternary structure, interacts in vitro with the casein kinase 2 alpha subunit (CkII-alpha). The relevance of such interaction is however unclear in vivo. As to expression, probably not expressed in wild-type flies. In males lacking the Y chromosome, it is testis-specific and constitutes the main component of star-shaped crystals.

Unknown. In males lacking the Y chromosome, its strong overexpression leads to the appearance of proteinaceous star-shaped crystals in the primary spermatocytes causing meiotic drive, possibly by interfering with normal casein kinase 2 activity. This is Stellate protein CG33238 (Ste:CG33238) from Drosophila melanogaster (Fruit fly).